The chain runs to 160 residues: Large ribosomal subunit protein eL21B (160 aa).

Lys32 is covalently cross-linked (Glycyl lysine isopeptide (Lys-Gly) (interchain with G-Cter in ubiquitin)).

The protein belongs to the eukaryotic ribosomal protein eL21 family. Component of the large ribosomal subunit (LSU). Mature yeast ribosomes consist of a small (40S) and a large (60S) subunit. The 40S small subunit contains 1 molecule of ribosomal RNA (18S rRNA) and 33 different proteins (encoded by 57 genes). The large 60S subunit contains 3 rRNA molecules (25S, 5.8S and 5S rRNA) and 46 different proteins (encoded by 81 genes).

Its subcellular location is the cytoplasm. Component of the ribosome, a large ribonucleoprotein complex responsible for the synthesis of proteins in the cell. The small ribosomal subunit (SSU) binds messenger RNAs (mRNAs) and translates the encoded message by selecting cognate aminoacyl-transfer RNA (tRNA) molecules. The large subunit (LSU) contains the ribosomal catalytic site termed the peptidyl transferase center (PTC), which catalyzes the formation of peptide bonds, thereby polymerizing the amino acids delivered by tRNAs into a polypeptide chain. The nascent polypeptides leave the ribosome through a tunnel in the LSU and interact with protein factors that function in enzymatic processing, targeting, and the membrane insertion of nascent chains at the exit of the ribosomal tunnel. This is Large ribosomal subunit protein eL21B from Saccharomyces cerevisiae (strain ATCC 204508 / S288c) (Baker's yeast).